Reading from the N-terminus, the 513-residue chain is DNA damage response protein kinase DUN1 (513 aa).

Residues 1–12 (MSLSTKREHSGD) are compositionally biased toward basic and acidic residues. The tract at residues 1–29 (MSLSTKREHSGDVTDSSFKRQQRSNKPSS) is disordered. The residue at position 10 (S10) is a Phosphoserine. The FHA domain occupies 56-112 (TTIGRSRSCDVILSEPDISTFHAEFHLLQMDVDNFQRNLINVIDKSRNGTFINGNRL). A Phosphoserine modification is found at S139. Residues 200 to 480 (YLLGKELGAG…IDEALNHPWF (281 aa)) form the Protein kinase domain. ATP-binding positions include 206 to 214 (LGAGHYALV) and K229. The active-site Proton acceptor is D328. T380 is subject to Phosphothreonine.

It belongs to the protein kinase superfamily. CAMK Ser/Thr protein kinase family. CHEK2 subfamily. As to quaternary structure, interacts with the PAB-dependent poly(A)-nuclease (PAN) complex regulatory subunit PAN3 via its forkhead-associated (FHA) domain. Autophosphorylation increases in response to DNA damage.

It localises to the nucleus. It catalyses the reaction L-seryl-[protein] + ATP = O-phospho-L-seryl-[protein] + ADP + H(+). It carries out the reaction L-threonyl-[protein] + ATP = O-phospho-L-threonyl-[protein] + ADP + H(+). Functionally, transducer of the DNA damage signal. Phosphorylates SML1 on serine residues. Cooperates with the PAN deadenylation complex in the regulation of RAD5 mRNA levels and cell survival in response to replicational stress. In Saccharomyces cerevisiae (strain ATCC 204508 / S288c) (Baker's yeast), this protein is DNA damage response protein kinase DUN1 (DUN1).